Consider the following 318-residue polypeptide: Aspartate carbamoyltransferase catalytic subunit (318 aa).

R59 and T60 together coordinate carbamoyl phosphate. K87 contributes to the L-aspartate binding site. Positions 109, 137, and 140 each coordinate carbamoyl phosphate. Residues R170 and R224 each contribute to the L-aspartate site. Residues G265 and P266 each coordinate carbamoyl phosphate.

The protein belongs to the aspartate/ornithine carbamoyltransferase superfamily. ATCase family. As to quaternary structure, heterododecamer (2C3:3R2) of six catalytic PyrB chains organized as two trimers (C3), and six regulatory PyrI chains organized as three dimers (R2).

The enzyme catalyses carbamoyl phosphate + L-aspartate = N-carbamoyl-L-aspartate + phosphate + H(+). Its pathway is pyrimidine metabolism; UMP biosynthesis via de novo pathway; (S)-dihydroorotate from bicarbonate: step 2/3. Functionally, catalyzes the condensation of carbamoyl phosphate and aspartate to form carbamoyl aspartate and inorganic phosphate, the committed step in the de novo pyrimidine nucleotide biosynthesis pathway. This chain is Aspartate carbamoyltransferase catalytic subunit, found in Rhizobium etli (strain ATCC 51251 / DSM 11541 / JCM 21823 / NBRC 15573 / CFN 42).